The following is a 192-amino-acid chain: Imidazoleglycerol-phosphate dehydratase (192 aa).

Belongs to the imidazoleglycerol-phosphate dehydratase family.

The protein localises to the cytoplasm. It catalyses the reaction D-erythro-1-(imidazol-4-yl)glycerol 3-phosphate = 3-(imidazol-4-yl)-2-oxopropyl phosphate + H2O. The protein operates within amino-acid biosynthesis; L-histidine biosynthesis; L-histidine from 5-phospho-alpha-D-ribose 1-diphosphate: step 6/9. This chain is Imidazoleglycerol-phosphate dehydratase, found in Staphylococcus epidermidis (strain ATCC 35984 / DSM 28319 / BCRC 17069 / CCUG 31568 / BM 3577 / RP62A).